An 86-amino-acid polypeptide reads, in one-letter code: Small ribosomal subunit protein uS17 (86 aa).

It belongs to the universal ribosomal protein uS17 family. As to quaternary structure, part of the 30S ribosomal subunit.

Its function is as follows. One of the primary rRNA binding proteins, it binds specifically to the 5'-end of 16S ribosomal RNA. The chain is Small ribosomal subunit protein uS17 from Desulfotalea psychrophila (strain LSv54 / DSM 12343).